Reading from the N-terminus, the 710-residue chain is MEQTYQYAWIIPFVPLLVPMLIGAGLLIFPTVTKNLRRMWSFQSVLLLSIVMAFSIYLSIQQINRGSIYQYVWSWIINNDFSLEFGYLIDPLTSIMSILVTTVGILVLIYSDNYMAHDQGYLRFFTYMSFFCAAMLGLVTSSNFIQIYIFWELVGLCSYLLIGFWFTRPGAANACQKAFVTNRVGDFGLLLGILGFYWITGSFEFRELFQILNNLISSKEVNLLFVTLCAALLFVGAIAKSAQFPLHVWLPDAMEGPTPISALIHAATLVAAGIFLVARLLPLFLVIPYIMYFISLIGIITVLLGATLALAQQDIKRGLAYSTMSQLGYMMVALGMGSYRSALFHLITHAYSKALLFLAAGSVIHSMETIIGYSPEKSQNMVIMGGLTKHVPITKGAFLLGTLSLCGIPPLACFWSKDEILNDSWLYSPIFALIAWGTVGLTAFYMFRIYLMTFEGHLNVGFKNYSGKKNNPADSMSLWGKKGSKPINKNFRFFTIDEKGENQTKISYTSDPFESENTMLFPQILLCFVTFVIGFLGIPKELGFNLDILTQWLHPAIYLLHHTNSTDLAEFLKHTVISGGIAYCGIFIAFLLYKPTYSSFKSFLLINSLHQKSLKRVIRDKIVFVIYDWAYNRAYIDTFYKNFFVCQVRRFSQIIRSFDLRIIDQIFNCFAFLSFIASEGIKYLGYARIPFYLFFYFFFVSIFIFLFYKN.

17 consecutive transmembrane segments (helical) span residues 9–29, 40–60, 89–109, 125–145, 147–167, 185–205, 221–241, 258–278, 280–300, 327–347, 354–374, 396–416, 425–445, 519–539, 571–591, 657–676, and 689–709; these read WIIPFVPLLVPMLIGAGLLIF, WSFQSVLLLSIVMAFSIYLSI, IDPLTSIMSILVTTVGILVLI, FTYMSFFCAAMLGLVTSSNFI, IYIFWELVGLCSYLLIGFWFT, GDFGLLLGILGFYWITGSFEF, VNLLFVTLCAALLFVGAIAKS, TPISALIHAATLVAAGIFLVA, LLPLFLVIPYIMYFISLIGII, LGYMMVALGMGSYRSALFHLI, ALLFLAAGSVIHSMETIIGYS, GAFLLGTLSLCGIPPLACFWS, WLYSPIFALIAWGTVGLTAFY, MLFPQILLCFVTFVIGFLGIP, FLKHTVISGGIAYCGIFIAFL, SFDLRIIDQIFNCFAFLSFI, and IPFYLFFYFFFVSIFIFLFYK.

It belongs to the complex I subunit 5 family. As to quaternary structure, NDH is composed of at least 16 different subunits, 5 of which are encoded in the nucleus.

It localises to the plastid. It is found in the chloroplast thylakoid membrane. The catalysed reaction is a plastoquinone + NADH + (n+1) H(+)(in) = a plastoquinol + NAD(+) + n H(+)(out). It carries out the reaction a plastoquinone + NADPH + (n+1) H(+)(in) = a plastoquinol + NADP(+) + n H(+)(out). NDH shuttles electrons from NAD(P)H:plastoquinone, via FMN and iron-sulfur (Fe-S) centers, to quinones in the photosynthetic chain and possibly in a chloroplast respiratory chain. The immediate electron acceptor for the enzyme in this species is believed to be plastoquinone. Couples the redox reaction to proton translocation, and thus conserves the redox energy in a proton gradient. In Ipomoea purpurea (Common morning glory), this protein is NAD(P)H-quinone oxidoreductase subunit 5, chloroplastic (ndhF).